Here is a 447-residue protein sequence, read N- to C-terminus: N-succinylarginine dihydrolase (447 aa).

Substrate-binding positions include 19–28, Asn110, and 137–138; these read AGLSFGNEAS and HR. The active site involves Glu174. Residue Arg212 coordinates substrate. Residue His248 is part of the active site. 2 residues coordinate substrate: Asp250 and Asn359. The Nucleophile role is filled by Cys365.

This sequence belongs to the succinylarginine dihydrolase family. Homodimer.

The enzyme catalyses N(2)-succinyl-L-arginine + 2 H2O + 2 H(+) = N(2)-succinyl-L-ornithine + 2 NH4(+) + CO2. It functions in the pathway amino-acid degradation; L-arginine degradation via AST pathway; L-glutamate and succinate from L-arginine: step 2/5. Functionally, catalyzes the hydrolysis of N(2)-succinylarginine into N(2)-succinylornithine, ammonia and CO(2). The chain is N-succinylarginine dihydrolase from Salmonella typhimurium (strain LT2 / SGSC1412 / ATCC 700720).